The chain runs to 276 residues: Large ribosomal subunit protein uL2 (276 aa).

2 disordered regions span residues Gln37–Lys59 and Val225–Arg276. The span at Gln39–Ile49 shows a compositional bias: polar residues. The segment covering Thr50–Lys59 has biased composition (basic residues).

This sequence belongs to the universal ribosomal protein uL2 family. As to quaternary structure, part of the 50S ribosomal subunit. Forms a bridge to the 30S subunit in the 70S ribosome.

Its function is as follows. One of the primary rRNA binding proteins. Required for association of the 30S and 50S subunits to form the 70S ribosome, for tRNA binding and peptide bond formation. It has been suggested to have peptidyltransferase activity; this is somewhat controversial. Makes several contacts with the 16S rRNA in the 70S ribosome. The polypeptide is Large ribosomal subunit protein uL2 (Ralstonia pickettii (strain 12J)).